The sequence spans 322 residues: uncharacterized protein (322 aa).

Disordered stretches follow at residues 1-51 (MARS…GAWA) and 107-130 (QERQ…DRPD). Basic and acidic residues predominate over residues 119–130 (LHLEPGNEDRPD).

Expressed in skin and fetal lung.

This is an uncharacterized protein from Homo sapiens (Human).